The chain runs to 249 residues: Transcription repressor MYB5 (249 aa).

2 consecutive HTH myb-type domains span residues 20–72 and 73–127; these read KMGM…MNYL and RPSV…RKKL. 2 consecutive DNA-binding regions (H-T-H motif) follow at residues 48–72 and 100–123; these read WRSLPKRAGLLRCGKSCRLRWMNYL and WSLIAGRIPGRTDNEIKNYWNTHL. The disordered stretch occupies residues 133–180; the sequence is DPQTHKPLDANNIHKPEEEVSGGQKYPLEPISSSHTDDTTVNGGDGDS. A compositionally biased stretch (basic and acidic residues) spans 135 to 150; the sequence is QTHKPLDANNIHKPEE.

Interacts with BHLH002/EGL3/MYC146, BHLH012/MYC1 and BHLH042/TT8. As to expression, siliques.

It localises to the nucleus. Functionally, transcription activator, when associated with BHLH002/EGL3/MYC146, BHLH012/MYC1 or BHLH042/TT8. The chain is Transcription repressor MYB5 (MYB5) from Arabidopsis thaliana (Mouse-ear cress).